The sequence spans 946 residues: Bifunctional glutamine synthetase adenylyltransferase/adenylyl-removing enzyme (946 aa).

The interval 1-440 (MKPLSSPLQQ…VFNELIGDDE (440 aa)) is adenylyl removase. Residues 449-946 (SEQWRELWQD…ASWQKWLVEE (498 aa)) are adenylyl transferase.

The protein belongs to the GlnE family. Mg(2+) serves as cofactor.

It catalyses the reaction [glutamine synthetase]-O(4)-(5'-adenylyl)-L-tyrosine + phosphate = [glutamine synthetase]-L-tyrosine + ADP. The enzyme catalyses [glutamine synthetase]-L-tyrosine + ATP = [glutamine synthetase]-O(4)-(5'-adenylyl)-L-tyrosine + diphosphate. Functionally, involved in the regulation of glutamine synthetase GlnA, a key enzyme in the process to assimilate ammonia. When cellular nitrogen levels are high, the C-terminal adenylyl transferase (AT) inactivates GlnA by covalent transfer of an adenylyl group from ATP to specific tyrosine residue of GlnA, thus reducing its activity. Conversely, when nitrogen levels are low, the N-terminal adenylyl removase (AR) activates GlnA by removing the adenylyl group by phosphorolysis, increasing its activity. The regulatory region of GlnE binds the signal transduction protein PII (GlnB) which indicates the nitrogen status of the cell. The protein is Bifunctional glutamine synthetase adenylyltransferase/adenylyl-removing enzyme of Escherichia coli O6:H1 (strain CFT073 / ATCC 700928 / UPEC).